The primary structure comprises 394 residues: Elongation factor Tu (394 aa).

The tr-type G domain maps to 10–204 (KPHVNVGTIG…ALDSYIPEPQ (195 aa)). Residues 19–26 (GHVDHGKT) are G1. 19–26 (GHVDHGKT) is a GTP binding site. A Mg(2+)-binding site is contributed by T26. The tract at residues 60-64 (GITIN) is G2. Residues 81–84 (DCPG) form a G3 region. Residues 81–85 (DCPGH) and 136–139 (NKCD) each bind GTP. Positions 136 to 139 (NKCD) are G4. A G5 region spans residues 174–176 (SAL).

It belongs to the TRAFAC class translation factor GTPase superfamily. Classic translation factor GTPase family. EF-Tu/EF-1A subfamily. In terms of assembly, monomer.

It localises to the cytoplasm. It catalyses the reaction GTP + H2O = GDP + phosphate + H(+). In terms of biological role, GTP hydrolase that promotes the GTP-dependent binding of aminoacyl-tRNA to the A-site of ribosomes during protein biosynthesis. This is Elongation factor Tu from Shewanella putrefaciens (Pseudomonas putrefaciens).